The following is a 646-amino-acid chain: MADLSIIFPDGSEKQFPVGTTGEEIAASISPGLKKQALAIKLDGELVDLRRELSSGGSIEIITYKNNEGLEVLRHSSAHLLAQAIKRLFNDVKLGVGPVIEEGFYYDIDMEHKLTPEDLPKIEKEMKRIIDENLEIKRVEVSRNKAQEMFSDIGDDLKLELIDAIPENEQVTIYEQGEFFDLCRGIHVPSTSKIKAFKLLSISGAYWRGDSNNKQLQRIYGTAFEKKGQLEEHLQILEERKERDHRKLGKELGIFTVSQKVGQGLPLWLPKGATIRRNVERYIVDLEERLGYSHVYTPVLGNVELYKTSGHWDHYQDDMFPTMEMDNEELVLRPMNCPHHMMVFKNQLWSYRNLPVRIAELGTMHRHEMSGALAGLQRVRAMTLNDAHIFARPDQLKEEFIRVVELVQHVYKDFGIDDYYFRLSYRDPEDKEKYVDNDEMWEKAQAMLKETMEDMNLEYVEAEGEAAFYGPKLDVQVKTALGKDETLSTIQLDFHLPERFDLTYIGEDGNQHRPVVIHRGVVSTMERFVAFLIEEYKGAFPTWLAPVQVKIIPVSLQAHLDYAKDIEEKLRYQGVRVELDERDEKIGYKIREAQTQKVPFALVLGDKEMESNSVNYRRYGEQDTETLEFDQFLNLIKEEVDNKKIK.

Residues 1–63 form the TGS domain; it reads MADLSIIFPD…SSGGSIEIIT (63 aa). The catalytic stretch occupies residues 244–541; the sequence is DHRKLGKELG…LIEEYKGAFP (298 aa). Positions 337, 388, and 518 each coordinate Zn(2+).

It belongs to the class-II aminoacyl-tRNA synthetase family. As to quaternary structure, homodimer. Requires Zn(2+) as cofactor.

The protein localises to the cytoplasm. The catalysed reaction is tRNA(Thr) + L-threonine + ATP = L-threonyl-tRNA(Thr) + AMP + diphosphate + H(+). Functionally, catalyzes the attachment of threonine to tRNA(Thr) in a two-step reaction: L-threonine is first activated by ATP to form Thr-AMP and then transferred to the acceptor end of tRNA(Thr). Also edits incorrectly charged L-seryl-tRNA(Thr). The polypeptide is Threonine--tRNA ligase (Oceanobacillus iheyensis (strain DSM 14371 / CIP 107618 / JCM 11309 / KCTC 3954 / HTE831)).